A 163-amino-acid polypeptide reads, in one-letter code: uncharacterized protein (163 aa).

Residues 136–161 (QKYIENHQKEINEHVEKLRTLHKELR) adopt a coiled-coil conformation.

This is an uncharacterized protein from Acanthamoeba polyphaga (Amoeba).